The sequence spans 237 residues: UPF0280 protein Mthe_1297 (237 aa).

This sequence belongs to the UPF0280 family.

This is UPF0280 protein Mthe_1297 from Methanothrix thermoacetophila (strain DSM 6194 / JCM 14653 / NBRC 101360 / PT) (Methanosaeta thermophila).